A 132-amino-acid polypeptide reads, in one-letter code: Small ribosomal subunit protein uS8 (132 aa).

It belongs to the universal ribosomal protein uS8 family. Part of the 30S ribosomal subunit. Contacts proteins S5 and S12.

Its function is as follows. One of the primary rRNA binding proteins, it binds directly to 16S rRNA central domain where it helps coordinate assembly of the platform of the 30S subunit. This is Small ribosomal subunit protein uS8 from Macrococcus caseolyticus (strain JCSC5402) (Macrococcoides caseolyticum).